The chain runs to 82 residues: MALSVQIRAACLLLLLLVSLTAGSVLPSQTRQLTDLRTQDTAGATAGLTPVAQRLRRDTHFPICIFCCGCCRKAICGMCCKT.

Positions 1–23 are cleaved as a signal peptide; it reads MALSVQIRAACLLLLLLVSLTAG. A propeptide spanning residues 24-53 is cleaved from the precursor; it reads SVLPSQTRQLTDLRTQDTAGATAGLTPVAQ. 4 disulfide bridges follow: Cys-64/Cys-80, Cys-67/Cys-70, Cys-68/Cys-76, and Cys-71/Cys-79.

The protein belongs to the hepcidin family. Interacts with SLC40A1; this interaction promotes SLC40A1 rapid ubiquitination.

It localises to the secreted. In terms of biological role, liver-produced hormone that constitutes the main circulating regulator of iron absorption and distribution across tissues. Acts by promoting endocytosis and degradation of ferroportin/SLC40A1, leading to the retention of iron in iron-exporting cells and decreased flow of iron into plasma. Controls the major flows of iron into plasma: absorption of dietary iron in the intestine, recycling of iron by macrophages, which phagocytose old erythrocytes and other cells, and mobilization of stored iron from hepatocytes. Its function is as follows. Has strong antimicrobial activity against E.coli ML35P N.cinerea and weaker against S.epidermidis, S.aureus and group b streptococcus bacteria. Active against the fungus C.albicans. No activity against P.aeruginosa. The protein is Hepcidin (HAMP) of Sus scrofa (Pig).